The chain runs to 489 residues: Nitrogenase molybdenum-iron protein alpha chain (489 aa).

3 residues coordinate [8Fe-7S] cluster: Cys-71, Cys-97, and Cys-163. Residues Cys-284 and His-451 each coordinate [7Fe-Mo-9S-C-homocitryl] cluster.

The protein belongs to the NifD/NifK/NifE/NifN family. As to quaternary structure, tetramer of two alpha and two beta chains. Forms complex with the iron protein (nitrogenase component 2). [8Fe-7S] cluster is required as a cofactor. It depends on [7Fe-Mo-9S-C-homocitryl] cluster as a cofactor.

The enzyme catalyses N2 + 8 reduced [2Fe-2S]-[ferredoxin] + 16 ATP + 16 H2O = H2 + 8 oxidized [2Fe-2S]-[ferredoxin] + 2 NH4(+) + 16 ADP + 16 phosphate + 6 H(+). Functionally, this molybdenum-iron protein is part of the nitrogenase complex that catalyzes the key enzymatic reactions in nitrogen fixation. This Acidithiobacillus ferridurans protein is Nitrogenase molybdenum-iron protein alpha chain (nifD).